The sequence spans 259 residues: ATP synthase subunit a (259 aa).

5 consecutive transmembrane segments (helical) span residues 29-49 (TVNIDSMIFSVILGALFIWIF), 90-110 (IAPLALTVFIWVFLMNLMDLI), 134-154 (DVNITMSMALGVFALIIIYSI), 208-228 (LVFILIAGLLPWWSQWLLSVP), and 230-250 (ALFHILVITLQAFIFMVLTIV).

This sequence belongs to the ATPase A chain family. In terms of assembly, F-type ATPases have 2 components, CF(1) - the catalytic core - and CF(0) - the membrane proton channel. CF(1) has five subunits: alpha(3), beta(3), gamma(1), delta(1), epsilon(1). CF(0) has three main subunits: a(1), b(2) and c(9-12). The alpha and beta chains form an alternating ring which encloses part of the gamma chain. CF(1) is attached to CF(0) by a central stalk formed by the gamma and epsilon chains, while a peripheral stalk is formed by the delta and b chains.

It is found in the cell inner membrane. Its function is as follows. Key component of the proton channel; it plays a direct role in the translocation of protons across the membrane. The protein is ATP synthase subunit a of Aeromonas salmonicida (strain A449).